Reading from the N-terminus, the 90-residue chain is Protein LURE 1.4 (90 aa).

Positions 1–19 (MKCPSIFLTLLIFVSSCTS) are cleaved as a signal peptide. Asparagine 23 carries N-linked (GlcNAc...) asparagine glycosylation. 3 disulfide bridges follow: cysteine 58–cysteine 75, cysteine 61–cysteine 82, and cysteine 65–cysteine 84. The interval 67-87 (RRGKYIRTCSFERKLCRCSIS) is PRK6 binding.

This sequence belongs to the DEFL family. In terms of assembly, binds to PRK6 LRRs. As to expression, expressed in the pistil. Detected exclusively in the synergid cells.

It is found in the secreted. Pollen tube attractants guiding pollen tubes to the ovular micropyle. The chain is Protein LURE 1.4 from Arabidopsis thaliana (Mouse-ear cress).